The following is an 889-amino-acid chain: Potassium/sodium hyperpolarization-activated cyclic nucleotide-gated channel 2 (889 aa).

A compositionally biased stretch (gly residues) spans 1–10 (MDARGGGGRP). The tract at residues 1-159 (MDARGGGGRP…GPAGEPRGSQ (159 aa)) is disordered. The Cytoplasmic segment spans residues 1 to 215 (MDARGGGGRP…PYSDFRFYWD (215 aa)). Positions 17-55 (TPAPGPPPPPPPAPPQQQPPPPPPPAPPPGPGPAPPQHP) are enriched in pro residues. The span at 129-155 (GAASGPAPGPGPAEEAGSEEAGPAGEP) shows a compositional bias: low complexity. Phosphoserine is present on residues Ser146 and Ser161. The segment at 158 to 209 (SQASFMQRQFGALLQPGVNKFSLRMFGSQKAVEREQERVKSAGAWIIHPYSD) is involved in subunit assembly. Residues 216–236 (FTMLLFMVGNLIIIPVGITFF) traverse the membrane as a helical segment. Over 237–240 (KDET) the chain is Extracellular. The helical transmembrane segment at 241 to 261 (TAPWIVFNVVSDTFFLMDLVL) threads the bilayer. The Cytoplasmic segment spans residues 262–288 (NFRTGIVIEDNTEIILDPEKIKKKYLR). A helical transmembrane segment spans residues 289–309 (TWFVVDFVSSIPVDYIFLIVE). At 310-317 (KGIDSEVY) the chain is on the extracellular side. The chain crosses the membrane as a helical; Voltage-sensor span at residues 318 to 338 (KTARALRIVRFTKILSLLRLL). The Cytoplasmic portion of the chain corresponds to 339-369 (RLSRLIRYIHQWEEIFHMTYDLASAVMRICN). Residues 370–390 (LISMMLLLCHWDGCLQFLVPM) traverse the membrane as a helical segment. The Extracellular segment spans residues 391 to 413 (LQDFPRNCWVSINGMVNHSWSEL). Asn407 is a glycosylation site (N-linked (GlcNAc...) asparagine). The segment at residues 414–435 (YSFALFKAMSHMLCIGYGRQAP) is an intramembrane region (pore-forming). Residues 436–440 (ESMTD) lie on the Extracellular side of the membrane. A helical transmembrane segment spans residues 441-461 (IWLTMLSMIVGATCYAMFIGH). Residues 462–889 (ATALIQSLDS…SARSRLSSNL (428 aa)) lie on the Cytoplasmic side of the membrane. 8 residues coordinate 3',5'-cyclic AMP: Met599, Gly608, Glu609, Ile610, Cys611, Arg618, Thr619, and Arg659. Position 668 is a phosphoserine; by PKG/PRKG2 (Ser668). Ser754 bears the Phosphoserine mark. Residues 754–889 (SPRLVRRPPP…SARSRLSSNL (136 aa)) are disordered. An Omega-N-methylarginine modification is found at Arg756. Residues 760-784 (RPPPGPAPAAASPGPPPPASPPGAP) show a composition bias toward pro residues. A phosphoserine mark is found at Ser771, Ser779, Ser786, Ser866, and Ser868. A compositionally biased stretch (low complexity) spans 785–860 (ASPRAPRTSP…TPAARAAAPS (76 aa)).

Belongs to the potassium channel HCN family. In terms of assembly, homotetramer. The channel is composed of a homo- or heterotetrameric complex of pore-forming subunits. Heterotetramer with HCN1. Forms an obligate 4:4 complex with accessory subunit PEX5L. Interacts with KCNE2. Phosphorylation at Ser-668 by PRKG2 shifts the voltage-dependence to more negative voltages, hence counteracting the stimulatory effect of cGMP on gating. In terms of processing, S-palmitoylated. Post-translationally, N-glycosylated; required for cell surface trafficking of HCN2. In terms of tissue distribution, highly expressed throughout the brain. Detected at low levels in heart.

It localises to the cell membrane. It carries out the reaction Na(+)(in) = Na(+)(out). The catalysed reaction is K(+)(in) = K(+)(out). The enzyme catalyses NH4(+)(in) = NH4(+)(out). Activated by cAMP, and at 10-100 times higher concentrations, also by cGMP. cAMP binding causes a conformation change that leads to the assembly of an active tetramer and channel opening. Binding of cAMP removes a tonic inhibition conferred by cyclic nucleotide-binding domain (CNBD) on channel opening. Channel activity is modulated by intracellular chloride ions and pH; acidic pH shifts the activation to more negative voltages. Inhibited by extracellular cesium ions. Its function is as follows. Hyperpolarization-activated ion channel that is permeable to sodium and potassium ions. Displays lower selectivity for K(+) over Na(+) ions. Contributes to the native pacemaker currents in heart (If) and in neurons (Ih). Can also transport ammonium in the distal nephron. Involved in the initiation of neuropathic pain in sensory neurons. In Homo sapiens (Human), this protein is Potassium/sodium hyperpolarization-activated cyclic nucleotide-gated channel 2.